A 205-amino-acid chain; its full sequence is Methylamine utilization protein MauD (205 aa).

Residues 5–25 form a helical membrane-spanning segment; it reads IMIASNVLLWGAFLALAALML. In terms of domain architecture, Thioredoxin spans 50-184; that stretch reads PDIGERSPVF…VESLFETTRV (135 aa).

The protein localises to the membrane. Its pathway is one-carbon metabolism; methylamine degradation. May be specifically involved in the processing, transport, and/or maturation of the MADH beta-subunit. In Methylobacillus flagellatus (strain ATCC 51484 / DSM 6875 / VKM B-1610 / KT), this protein is Methylamine utilization protein MauD (mauD).